The chain runs to 264 residues: tRNA pseudouridine synthase A (264 aa).

D51 functions as the Nucleophile in the catalytic mechanism. Y109 is a binding site for substrate.

Belongs to the tRNA pseudouridine synthase TruA family. Homodimer.

It catalyses the reaction uridine(38/39/40) in tRNA = pseudouridine(38/39/40) in tRNA. Formation of pseudouridine at positions 38, 39 and 40 in the anticodon stem and loop of transfer RNAs. The protein is tRNA pseudouridine synthase A of Aromatoleum aromaticum (strain DSM 19018 / LMG 30748 / EbN1) (Azoarcus sp. (strain EbN1)).